The chain runs to 910 residues: METHPSLAVKWSCPDLTIYAGEVTIGEEDRNKMDSKKRKLEKTRITEAACALLNSGGGLIAMQMTNKSEHPVEMGQDLEKSLRELIMSPNMQAFFETKQQEDQFYIFVKSWSCRPEDGSTKPRICSLGSSLYCRSITSKVAMDSREAFEFLKDKKACIKYRPTDDGAPPAKIPRAMCQNSLESNPAFEIFQSKKLEYGQCLLFSESTSIEFKQFSTKHVQAYMKNIIPEYISAFANTQGGYLFIGVDDKRIILGCPKDNVDRDSLKTVANETISKVPVFHFCSSKDKDKVSYETRVIDVFQEGNLYGYLCVIKVEPFCCAVFSEAPISWMVDKEKGVYRLNTEEWVRMMVDFGPEASSKDLSKDFECQLSLCNSPPHCRPVYSKKGLQHKVDLQQRLFQVSPDCLKYTPESLWKELCSQHKRLKGLVKQQIRSFSCGLLILYRSWAVDLNLKEKQEVICDALLIAQNSPPILYTILGEQDEQGQDYCNHTAFTLKQKLVNTGGYTGRVCVMTKVLCLSSQNNIETNGGSVSPINYPSSYNLANIQEMQDLLQALVIVLLNFRSFLSDQLGCEILNLLTAQQYEILSKSLRKTRELFVHGLPGSGKTIIAMKIMEKIRNTFHCETDSILYICENQPLRDFIRAKRICQAVTRKTFMNYRFKTNSFQHIIVDEAQNFRTEDGNWYGKAKAISRRVKSCPGMFWIFLDYFQTSHLKESGLPDFSRQYPREELTQVVRNGDKIAEFLQKELQKIRDNPPCSIPRQSLNIVHEFKWSQSVSGNIKTEQFTLEDMVIYVADKCYDFLRKGYSLQDIAVLFSTDKEKKTYESMFLGEMRKRRRASEMNHAYLCDSNMFDSIRRFSGLERSIVFGINPIATEQPISHNLLLCLASRAMKHLYILYFSTPEGHSSTEAC.

The segment at 1–354 is n'-domain region; the sequence is METHPSLAVK…WVRMMVDFGP (354 aa). Active-site residues include E205 and E210. Positions 280, 282, and 319 each coordinate Zn(2+). Residue 599-606 coordinates ATP; that stretch reads GLPGSGKT.

This sequence belongs to the Schlafen family. Subgroup III subfamily. The cofactor is Mg(2+). In terms of tissue distribution, in T-cells, expressed at relatively constant levels during development: expressed in immature CD3(-)CD4(-)CD8(-) T-cells (DN stage), in CD4(+)CD8(+) double-positive stage (DP) and mature CD4(+) or CD8(+) thymocytes. Expression is slightly reduced at the DP stage.

Its subcellular location is the cytoplasm. Endoribonuclease that cleaves tRNAs and rRNAs. Cleaves tRNAs 11 nucleotides from the 3'-terminus at the acceptor stem. May be involved in immune system via regulation of inflammation. This chain is Schlafen family member 8, found in Mus musculus (Mouse).